Consider the following 282-residue polypeptide: MDVVDELIKLHEEHVSGLLRLCGQAGWPDYGEQELKLLVQQGRFFGYQNVSGDIISCIGLFLFGRLTSIGLVIVDKEYQRLGLGRRMVNACITQTDENTAIRLCATKEGLPLYEKAGFHTAGSVRKYSCHSFQPYTKKLDAELTSFREQDFHDLTAADLAAFGGDRSNLLQQLISASCECIIARNQDGQLIGYGLSVQTPANLKFGPIIAPSSDVAAQIITRLAAGKQGPMRIDIPSEHTSLHDSLIEMGFHKDDEPPILFYQKKAPIQNGHLYALISQALG.

The N-acetyltransferase domain occupies 5–140 (DELIKLHEEH…SFQPYTKKLD (136 aa)).

The protein belongs to the acetyltransferase family.

This is an uncharacterized protein from Bacillus subtilis (strain 168).